A 377-amino-acid polypeptide reads, in one-letter code: Pseudouridylate synthase RPUSD4, mitochondrial (377 aa).

The tract at residues 51-70 is disordered; the sequence is LRAQKQQQKTKEPAPTNPVQ. The active site involves aspartate 153.

Belongs to the pseudouridine synthase RluA family. As to quaternary structure, interacts with 16S mt-rRNA, mt-tRNA(Phe) and mt-tRNA(Met). Forms a regulatory protein-RNA complex, consisting of RCC1L, NGRN, RPUSD3, RPUSD4, TRUB2, FASTKD2 and 16S mt-rRNA.

The protein resides in the mitochondrion matrix. Its subcellular location is the nucleus. The protein localises to the cytoplasm. The catalysed reaction is uridine in 5S rRNA = pseudouridine in 5S rRNA. It catalyses the reaction a uridine in tRNA = a pseudouridine in tRNA. The enzyme catalyses a uridine in mRNA = a pseudouridine in mRNA. Catalyzes uridine to pseudouridine isomerization (pseudouridylation) of different mitochondrial RNA substrates. Acts on position 1397 in 16S mitochondrial ribosomal RNA (16S mt-rRNA). This modification is required for the assembly of 16S mt-rRNA into a functional mitochondrial ribosome. As a component of a functional protein-RNA module, consisting of RCC1L, NGRN, RPUSD3, RPUSD4, TRUB2, FASTKD2 and 16S mt-rRNA, controls 16S mt-rRNA abundance and is required for intra-mitochondrial translation. Acts on position 39 in mitochondrial tRNA(Phe). Also catalyzes pseudouridylation of mRNAs in nucleus: acts as a regulator of pre-mRNA splicing by mediating pseudouridylation of pre-mRNAs at locations associated with alternatively spliced regions. Pseudouridylation of pre-mRNAs near splice sites directly regulates mRNA splicing and mRNA 3'-end processing. The polypeptide is Pseudouridylate synthase RPUSD4, mitochondrial (Bos taurus (Bovine)).